We begin with the raw amino-acid sequence, 93 residues long: Large ribosomal subunit protein bL27 (93 aa).

Residues 1 to 8 (MIMDLQFF) constitute a propeptide that is removed on maturation. The tract at residues 8-29 (FSHHKGGGSTANGRNSAGRRLG) is disordered.

The protein belongs to the bacterial ribosomal protein bL27 family. The N-terminus is cleaved by ribosomal processing cysteine protease Prp.

In Limosilactobacillus reuteri (strain DSM 20016) (Lactobacillus reuteri), this protein is Large ribosomal subunit protein bL27.